A 352-amino-acid chain; its full sequence is S-adenosylmethionine:tRNA ribosyltransferase-isomerase (352 aa).

Belongs to the QueA family. Monomer.

The protein localises to the cytoplasm. It catalyses the reaction 7-aminomethyl-7-carbaguanosine(34) in tRNA + S-adenosyl-L-methionine = epoxyqueuosine(34) in tRNA + adenine + L-methionine + 2 H(+). The protein operates within tRNA modification; tRNA-queuosine biosynthesis. Functionally, transfers and isomerizes the ribose moiety from AdoMet to the 7-aminomethyl group of 7-deazaguanine (preQ1-tRNA) to give epoxyqueuosine (oQ-tRNA). This Gloeobacter violaceus (strain ATCC 29082 / PCC 7421) protein is S-adenosylmethionine:tRNA ribosyltransferase-isomerase.